The chain runs to 313 residues: Ribosomal RNA small subunit methyltransferase H (313 aa).

S-adenosyl-L-methionine is bound by residues 36–38, Asp-56, Phe-80, Asp-102, and Gln-109; that span reads GGH.

Belongs to the methyltransferase superfamily. RsmH family.

It is found in the cytoplasm. It catalyses the reaction cytidine(1402) in 16S rRNA + S-adenosyl-L-methionine = N(4)-methylcytidine(1402) in 16S rRNA + S-adenosyl-L-homocysteine + H(+). Specifically methylates the N4 position of cytidine in position 1402 (C1402) of 16S rRNA. The sequence is that of Ribosomal RNA small subunit methyltransferase H from Actinobacillus pleuropneumoniae serotype 7 (strain AP76).